The sequence spans 73 residues: IGMVVECKDGYLMGPDGCKLDCLMRKGTFCAETCSLRKGKDGYCYAWLACYCYNMPDSVKVWERATNRCGKGK.

An N-terminal signal peptide occupies residues 1-7 (IGMVVEC). The LCN-type CS-alpha/beta domain maps to 8–70 (KDGYLMGPDG…VWERATNRCG (63 aa)). 4 disulfides stabilise this stretch: Cys18–Cys69, Cys22–Cys44, Cys30–Cys50, and Cys34–Cys52. Lys71 is modified (lysine amide).

The protein belongs to the long (4 C-C) scorpion toxin superfamily. Sodium channel inhibitor family. Beta subfamily. Expressed by the venom gland.

The protein localises to the secreted. Its function is as follows. Beta toxins bind voltage-independently at site-4 of sodium channels (Nav) and shift the voltage of activation toward more negative potentials thereby affecting sodium channel activation and promoting spontaneous and repetitive firing. In Tityus discrepans (Venezuelan scorpion), this protein is Toxin Td3.